A 738-amino-acid chain; its full sequence is Alanine--tRNA ligase (738 aa).

Residues H564, H568, C666, and H670 each contribute to the Zn(2+) site.

Belongs to the class-II aminoacyl-tRNA synthetase family. As to quaternary structure, homotetramer. Zn(2+) is required as a cofactor.

It localises to the cytoplasm. The catalysed reaction is tRNA(Ala) + L-alanine + ATP = L-alanyl-tRNA(Ala) + AMP + diphosphate. In terms of biological role, catalyzes the attachment of alanine to tRNA(Ala) in a two-step reaction: alanine is first activated by ATP to form Ala-AMP and then transferred to the acceptor end of tRNA(Ala). Also edits incorrectly charged Ser-tRNA(Ala) and Gly-tRNA(Ala) via its editing domain. The polypeptide is Alanine--tRNA ligase (alaS) (Yersinia pestis bv. Antiqua (strain Antiqua)).